Reading from the N-terminus, the 351-residue chain is Keratocan (351 aa).

An N-terminal signal peptide occupies residues 1–20; that stretch reads MATPNCLILWVLLIADTVWT. The LRRNT domain occupies 34–72; it reads DWDVHDDFYCPRECFCPPSFPTALYCENRGLTEIPPIPS. 2 disulfides stabilise this stretch: C43–C49 and C47–C59. LRR repeat units follow at residues 73 to 94, 97 to 118, 123 to 143, 144 to 165, 168 to 181, 194 to 214, 215 to 236, 239 to 259, 264 to 283, and 284 to 305; these read RIWY…PFEN, QLRW…KGAL, KLLF…PLPR, SLEQ…TFSN, NLTL…KLLD, NLMQ…RLPA, NTMQ…YFNV, KVAF…PSRG, SILD…RINA, and NLQH…VICP. N-linked (GlcNAc...) (keratan sulfate) asparagine glycosylation is present at N94. N-linked (GlcNAc...) (keratan sulfate) asparagine glycosylation occurs at N168. N-linked (GlcNAc...) asparagine glycosylation is present at N223. The N-linked (GlcNAc...) asparagine glycan is linked to N299. Cysteines 304 and 342 form a disulfide.

It belongs to the small leucine-rich proteoglycan (SLRP) family. SLRP class II subfamily. In terms of processing, binds keratan sulfate chains. Selectively expressed in cornea of adult where it is detected in keratocytes but not in scleral cells. In embryo, first detected in periocular mesenchymal cells migrating toward developing cornea on 13.5 dpc; expression gradually restricted to corneal stromal cells on 14.5 to 18.5 dpc. Detected in scleral cells of 15.5 dpc but not in 18.5 dpc embryos.

It is found in the secreted. The protein localises to the extracellular space. Its subcellular location is the extracellular matrix. In terms of biological role, may be important in developing and maintaining corneal transparency and for the structure of the stromal matrix. This Mus musculus (Mouse) protein is Keratocan (Kera).